We begin with the raw amino-acid sequence, 61 residues long: MARKCEICGKGPQFGNRVSHSNRKTRHKFNPNIQSVRIEINGVSRKVKICTSCLRSLKKSV.

This sequence belongs to the bacterial ribosomal protein bL28 family.

In Nautilia profundicola (strain ATCC BAA-1463 / DSM 18972 / AmH), this protein is Large ribosomal subunit protein bL28.